The sequence spans 174 residues: Large ribosomal subunit protein bL17 (174 aa).

Belongs to the bacterial ribosomal protein bL17 family. In terms of assembly, part of the 50S ribosomal subunit. Contacts protein L32.

The sequence is that of Large ribosomal subunit protein bL17 from Acetivibrio thermocellus (strain ATCC 27405 / DSM 1237 / JCM 9322 / NBRC 103400 / NCIMB 10682 / NRRL B-4536 / VPI 7372) (Clostridium thermocellum).